Reading from the N-terminus, the 633-residue chain is 1-deoxy-D-xylulose-5-phosphate synthase (633 aa).

Residues 1–22 (MPTTFHEIPRKRPTTPLLDRAQ) form a disordered region. Residues H87 and 128-130 (GHS) contribute to the thiamine diphosphate site. Position 159 (D159) interacts with Mg(2+). Residues 160-161 (GA), N188, F295, and E378 contribute to the thiamine diphosphate site. A Mg(2+)-binding site is contributed by N188.

It belongs to the transketolase family. DXPS subfamily. As to quaternary structure, homodimer. Mg(2+) is required as a cofactor. Thiamine diphosphate serves as cofactor.

The enzyme catalyses D-glyceraldehyde 3-phosphate + pyruvate + H(+) = 1-deoxy-D-xylulose 5-phosphate + CO2. Its pathway is metabolic intermediate biosynthesis; 1-deoxy-D-xylulose 5-phosphate biosynthesis; 1-deoxy-D-xylulose 5-phosphate from D-glyceraldehyde 3-phosphate and pyruvate: step 1/1. Catalyzes the acyloin condensation reaction between C atoms 2 and 3 of pyruvate and glyceraldehyde 3-phosphate to yield 1-deoxy-D-xylulose-5-phosphate (DXP). In Pseudomonas fluorescens (strain ATCC BAA-477 / NRRL B-23932 / Pf-5), this protein is 1-deoxy-D-xylulose-5-phosphate synthase.